The chain runs to 199 residues: Golgi to ER traffic protein 1 (199 aa).

The Lumenal portion of the chain corresponds to 1 to 11 (MLLPDLHPYTI). A helical membrane pass occupies residues 12 to 31 (LLSIFLVLVAKQLVATIGKS). At 32-115 (TIQEFVWLVY…SIDKASNALI (84 aa)) the chain is on the cytoplasmic side. Residues 76–116 (YAKWTKLNRQADKLSAELQKLNQEIQQQKSSIDKASNALIL) are a coiled coil. The chain crosses the membrane as a helical span at residues 116–136 (LVLTTLPIWIARVFYRKTHLF). Topologically, residues 137-160 (YIRQGIFPKYVEWVLALPFLPNGA) are lumenal. The helical transmembrane segment at 161–177 (VGLTIWMFAVNSVVSNF) threads the bilayer. The Cytoplasmic segment spans residues 178-199 (SFLVSFPFAKRVSKPVRDTKVE).

The protein belongs to the WRB/GET1 family. As to quaternary structure, component of the Golgi to ER traffic (GET) complex, which is composed of GET1, GET2 and GET3. Within the complex, GET1 and GET2 form a heterotetramer which is stabilized by phosphatidylinositol binding and which binds to the GET3 homodimer.

It localises to the endoplasmic reticulum membrane. The protein resides in the golgi apparatus membrane. Its function is as follows. Required for the post-translational delivery of tail-anchored (TA) proteins to the endoplasmic reticulum. Together with GET2, acts as a membrane receptor for soluble GET3, which recognizes and selectively binds the transmembrane domain of TA proteins in the cytosol. The GET complex cooperates with the HDEL receptor ERD2 to mediate the ATP-dependent retrieval of resident ER proteins that contain a C-terminal H-D-E-L retention signal from the Golgi to the ER. The chain is Golgi to ER traffic protein 1 from Candida albicans (strain SC5314 / ATCC MYA-2876) (Yeast).